Consider the following 100-residue polypeptide: NAD(P)H-quinone oxidoreductase subunit 4L, chloroplastic (100 aa).

3 consecutive transmembrane segments (helical) span residues 1-21 (MFGHALLLGAFPFCIGIYGLI), 29-49 (ALMCLELIFNAVNVNFVTFPN), and 63-83 (VFVIAVAAAEAAIGSAIVLAI).

This sequence belongs to the complex I subunit 4L family. NDH is composed of at least 16 different subunits, 5 of which are encoded in the nucleus.

The protein localises to the plastid. It is found in the chloroplast thylakoid membrane. It carries out the reaction a plastoquinone + NADH + (n+1) H(+)(in) = a plastoquinol + NAD(+) + n H(+)(out). The catalysed reaction is a plastoquinone + NADPH + (n+1) H(+)(in) = a plastoquinol + NADP(+) + n H(+)(out). In terms of biological role, NDH shuttles electrons from NAD(P)H:plastoquinone, via FMN and iron-sulfur (Fe-S) centers, to quinones in the photosynthetic chain and possibly in a chloroplast respiratory chain. The immediate electron acceptor for the enzyme in this species is believed to be plastoquinone. Couples the redox reaction to proton translocation, and thus conserves the redox energy in a proton gradient. The polypeptide is NAD(P)H-quinone oxidoreductase subunit 4L, chloroplastic (Huperzia lucidula (Shining clubmoss)).